Here is a 239-residue protein sequence, read N- to C-terminus: MLNIKTKKKNKKRIYVFNKNPEFKFKHLVFQKNKFILKIINEIDKIDLMRSEIFNSTLPIDPQTGNILVRFRKLNRNRLLAIKAIIQAMLYHFNIKTKKVTASVEQLADECGLSTVSKSGNKSITRASRLISQFMEPMGFIKCKKIKTTNNKFSKEIILTPLFFMILVKNSSLSEGDTHLKQEFKILKNKNVHINSSETFAKQEILKKIINKYSLNKLKKLGPKKIKEKINTEYKNIKK.

It belongs to the IncFII RepA family.

Its function is as follows. This protein is essential for plasmid replication; it is involved in copy control functions. The protein is Probable replication-associated protein repA2 (repA2) of Buchnera aphidicola subsp. Baizongia pistaciae (strain Bp).